Reading from the N-terminus, the 181-residue chain is Negative modulator of initiation of replication (181 aa).

Interaction with DNA stretches follow at residues 87 to 88 (AV), 116 to 120 (RTRVY), and 150 to 156 (NTNTGRK).

This sequence belongs to the SeqA family. Homodimer. Polymerizes to form helical filaments.

The protein localises to the cytoplasm. In terms of biological role, negative regulator of replication initiation, which contributes to regulation of DNA replication and ensures that replication initiation occurs exactly once per chromosome per cell cycle. Binds to pairs of hemimethylated GATC sequences in the oriC region, thus preventing assembly of replication proteins and re-initiation at newly replicated origins. Repression is relieved when the region becomes fully methylated. This is Negative modulator of initiation of replication from Shigella flexneri.